The chain runs to 275 residues: F-box only protein 50 (275 aa).

The tract at residues M1 to A67 is disordered. The segment covering P26–A62 has biased composition (pro residues). 3 positions are modified to phosphoserine: S31, S37, and S49. Residues L95 to L273 enclose the FBA domain.

Expressed in the esophagus, oral cavity, skin, tongue and reproductive organs.

Its subcellular location is the cytoplasm. In terms of biological role, promotes cell proliferation. In Homo sapiens (Human), this protein is F-box only protein 50 (NCCRP1).